Here is a 505-residue protein sequence, read N- to C-terminus: Lysine--tRNA ligase (505 aa).

Mg(2+) contacts are provided by Glu415 and Glu422.

Belongs to the class-II aminoacyl-tRNA synthetase family. In terms of assembly, homodimer. It depends on Mg(2+) as a cofactor.

The protein resides in the cytoplasm. It catalyses the reaction tRNA(Lys) + L-lysine + ATP = L-lysyl-tRNA(Lys) + AMP + diphosphate. In Yersinia pseudotuberculosis serotype O:1b (strain IP 31758), this protein is Lysine--tRNA ligase.